Here is a 483-residue protein sequence, read N- to C-terminus: 3-isopropylmalate dehydratase large subunit (483 aa).

Residues Cys352, Cys412, and Cys415 each coordinate [4Fe-4S] cluster.

The protein belongs to the aconitase/IPM isomerase family. LeuC type 1 subfamily. In terms of assembly, heterodimer of LeuC and LeuD. Requires [4Fe-4S] cluster as cofactor.

The catalysed reaction is (2R,3S)-3-isopropylmalate = (2S)-2-isopropylmalate. Its pathway is amino-acid biosynthesis; L-leucine biosynthesis; L-leucine from 3-methyl-2-oxobutanoate: step 2/4. Its function is as follows. Catalyzes the isomerization between 2-isopropylmalate and 3-isopropylmalate, via the formation of 2-isopropylmaleate. The sequence is that of 3-isopropylmalate dehydratase large subunit from Paenarthrobacter aurescens (strain TC1).